Consider the following 564-residue polypeptide: Bifunctional protein CrtB/UppS (564 aa).

The active site involves Asp329. Asp329 contributes to the Mg(2+) binding site. Residues 330–333 (GNRR), Trp334, His346, and 374–376 (STE) contribute to the substrate site. Asn377 acts as the Proton acceptor in catalysis. Substrate is bound by residues Trp378, Arg380, Arg497, and 502–504 (RIS). Residue Glu515 coordinates Mg(2+).

The protein in the N-terminal section; belongs to the phytoene/squalene synthase family. In the C-terminal section; belongs to the UPP synthase family. In terms of assembly, homodimer. Requires Mg(2+) as cofactor.

It carries out the reaction 2 (2E,6E,10E)-geranylgeranyl diphosphate = 15-cis-phytoene + 2 diphosphate. Its pathway is carotenoid biosynthesis; phytoene biosynthesis; all-trans-phytoene from geranylgeranyl diphosphate: step 1/1. Catalyzes the reaction from prephytoene diphosphate to phytoene. In terms of biological role, catalyzes the condensation of isopentenyl diphosphate (IPP) with allylic pyrophosphates generating different type of terpenoids. The sequence is that of Bifunctional protein CrtB/UppS (crtB/uppS3) from Streptomyces coelicolor (strain ATCC BAA-471 / A3(2) / M145).